The chain runs to 362 residues: Heme A synthase (362 aa).

5 consecutive transmembrane segments (helical) span residues 11–31, 102–122, 128–148, 159–179, and 198–218; these read AAIRIWLSIVAGLIALMVLVG, VIGMVYLLPFLWFLWRGAVSG, LWLIFGLGALQGAVGWWMVAS, VRLATHLSLALLIFASIVWTL, and AWALVGVTFVQLYLGALVAGL. His262 contributes to the heme binding site. A run of 3 helical transmembrane segments spans residues 264 to 286, 297 to 317, and 318 to 338; these read MTAYTLLALAAWHAFDVMRAGAG, LAAILVQAVLGIATLLMVVPI, and SLALLHQGTALIVLTFAVLQA. Position 323 (His323) interacts with heme.

The protein belongs to the COX15/CtaA family. Type 2 subfamily. In terms of assembly, interacts with CtaB. It depends on heme b as a cofactor.

It localises to the cell membrane. It catalyses the reaction Fe(II)-heme o + 2 A + H2O = Fe(II)-heme a + 2 AH2. It participates in porphyrin-containing compound metabolism; heme A biosynthesis; heme A from heme O: step 1/1. Its function is as follows. Catalyzes the conversion of heme O to heme A by two successive hydroxylations of the methyl group at C8. The first hydroxylation forms heme I, the second hydroxylation results in an unstable dihydroxymethyl group, which spontaneously dehydrates, resulting in the formyl group of heme A. The chain is Heme A synthase from Bradyrhizobium sp. (strain ORS 278).